A 613-amino-acid chain; its full sequence is Proline--tRNA ligase (613 aa).

Belongs to the class-II aminoacyl-tRNA synthetase family. ProS type 1 subfamily. Homodimer.

It localises to the cytoplasm. The catalysed reaction is tRNA(Pro) + L-proline + ATP = L-prolyl-tRNA(Pro) + AMP + diphosphate. Catalyzes the attachment of proline to tRNA(Pro) in a two-step reaction: proline is first activated by ATP to form Pro-AMP and then transferred to the acceptor end of tRNA(Pro). As ProRS can inadvertently accommodate and process non-cognate amino acids such as alanine and cysteine, to avoid such errors it has two additional distinct editing activities against alanine. One activity is designated as 'pretransfer' editing and involves the tRNA(Pro)-independent hydrolysis of activated Ala-AMP. The other activity is designated 'posttransfer' editing and involves deacylation of mischarged Ala-tRNA(Pro). The misacylated Cys-tRNA(Pro) is not edited by ProRS. The polypeptide is Proline--tRNA ligase (Cyanothece sp. (strain PCC 7425 / ATCC 29141)).